The following is a 226-amino-acid chain: PKHD-type hydroxylase PST_0995 (226 aa).

A Fe2OG dioxygenase domain is found at 78 to 178 (KVFPPLFNCY…RLASFFWIQS (101 aa)). The Fe cation site is built by His96, Asp98, and His159. Arg169 provides a ligand contact to 2-oxoglutarate.

It depends on Fe(2+) as a cofactor. L-ascorbate serves as cofactor.

This is PKHD-type hydroxylase PST_0995 from Stutzerimonas stutzeri (strain A1501) (Pseudomonas stutzeri).